We begin with the raw amino-acid sequence, 271 residues long: Large ribosomal subunit protein uL15c (271 aa).

2 disordered regions span residues Met1–Pro21 and Ser66–Arg120. A chloroplast-targeting transit peptide spans Met1 to Ala61. Positions Ser66–Ser76 are enriched in low complexity. The segment covering Ser91–Gly101 has biased composition (basic residues). A compositionally biased stretch (gly residues) spans His102–Met114.

As to quaternary structure, component of the chloroplast large ribosomal subunit (LSU). Mature 70S chloroplast ribosomes of higher plants consist of a small (30S) and a large (50S) subunit. The 30S small subunit contains 1 molecule of ribosomal RNA (16S rRNA) and 24 different proteins. The 50S large subunit contains 3 rRNA molecules (23S, 5S and 4.5S rRNA) and 33 different proteins.

The protein resides in the plastid. It localises to the chloroplast. Its function is as follows. Component of the chloroplast ribosome (chloro-ribosome), a dedicated translation machinery responsible for the synthesis of chloroplast genome-encoded proteins, including proteins of the transcription and translation machinery and components of the photosynthetic apparatus. The chain is Large ribosomal subunit protein uL15c (RPL15) from Spinacia oleracea (Spinach).